Consider the following 53-residue polypeptide: Rubredoxin-1 (53 aa).

In terms of domain architecture, Rubredoxin-like spans 1-53 (MEKFVCDVCGYIYDPVVGDPDNGVAPGTKFKDIPDTWVCPLCKLDKTHFSKVE). Fe cation-binding residues include Cys-6, Cys-9, Cys-39, and Cys-42.

This sequence belongs to the rubredoxin family. Fe(3+) serves as cofactor.

In terms of biological role, rubredoxin is a small nonheme, iron protein lacking acid-labile sulfide. Its single Fe, chelated to 4 Cys, functions as an electron acceptor and may also stabilize the conformation of the molecule. This is Rubredoxin-1 (rubR1) from Clostridium perfringens (strain 13 / Type A).